Here is a 322-residue protein sequence, read N- to C-terminus: L-asparaginase (322 aa).

The Asparaginase/glutaminase domain maps to 3 to 322 (KKVALITTGG…KEGIKDKFCY (320 aa)). Thr13 serves as the catalytic O-isoaspartyl threonine intermediate. Substrate contacts are provided by residues Ser56 and 89-90 (TD).

The protein belongs to the asparaginase 1 family. As to quaternary structure, homotetramer.

The protein localises to the cytoplasm. The enzyme catalyses L-asparagine + H2O = L-aspartate + NH4(+). The polypeptide is L-asparaginase (ansA) (Bacillus licheniformis).